The following is a 491-amino-acid chain: Cytochrome P450 2K3 (491 aa).

C434 serves as a coordination point for heme.

Belongs to the cytochrome P450 family. The cofactor is heme.

Its subcellular location is the endoplasmic reticulum membrane. It is found in the microsome membrane. It catalyses the reaction an organic molecule + reduced [NADPH--hemoprotein reductase] + O2 = an alcohol + oxidized [NADPH--hemoprotein reductase] + H2O + H(+). This chain is Cytochrome P450 2K3 (cyp2k3), found in Oncorhynchus mykiss (Rainbow trout).